The primary structure comprises 700 residues: Myotubularin-related protein 11 (700 aa).

A disordered region spans residues 1–39 (MWWGGRGQSFNIAPQKEEPEMGLSGPKSNPGNRMPEPSS). Residues 201–644 (LETLEDWETE…PQIRFWKRCY (444 aa)) enclose the Myotubularin phosphatase domain.

It belongs to the protein-tyrosine phosphatase family. Non-receptor class myotubularin subfamily.

This Mus musculus (Mouse) protein is Myotubularin-related protein 11 (Mtmr11).